A 440-amino-acid chain; its full sequence is NADH-quinone oxidoreductase subunit D (440 aa).

Belongs to the complex I 49 kDa subunit family. In terms of assembly, NDH-1 is composed of 14 different subunits. Subunits NuoB, C, D, E, F, and G constitute the peripheral sector of the complex.

The protein localises to the cell membrane. The enzyme catalyses a quinone + NADH + 5 H(+)(in) = a quinol + NAD(+) + 4 H(+)(out). NDH-1 shuttles electrons from NADH, via FMN and iron-sulfur (Fe-S) centers, to quinones in the respiratory chain. The immediate electron acceptor for the enzyme in this species is believed to be a menaquinone. Couples the redox reaction to proton translocation (for every two electrons transferred, four hydrogen ions are translocated across the cytoplasmic membrane), and thus conserves the redox energy in a proton gradient. The polypeptide is NADH-quinone oxidoreductase subunit D (Acidothermus cellulolyticus (strain ATCC 43068 / DSM 8971 / 11B)).